A 943-amino-acid polypeptide reads, in one-letter code: Isoleucine--tRNA ligase (943 aa).

A 'HIGH' region motif is present at residues 59-69 (PYANGQIHLGH). Glu577 provides a ligand contact to L-isoleucyl-5'-AMP. The 'KMSKS' region signature appears at 618-622 (KMSKS). Lys621 is a binding site for ATP. Residues Cys906, Cys909, Cys926, and Cys929 each coordinate Zn(2+).

The protein belongs to the class-I aminoacyl-tRNA synthetase family. IleS type 1 subfamily. Monomer. Zn(2+) is required as a cofactor.

It localises to the cytoplasm. It carries out the reaction tRNA(Ile) + L-isoleucine + ATP = L-isoleucyl-tRNA(Ile) + AMP + diphosphate. Functionally, catalyzes the attachment of isoleucine to tRNA(Ile). As IleRS can inadvertently accommodate and process structurally similar amino acids such as valine, to avoid such errors it has two additional distinct tRNA(Ile)-dependent editing activities. One activity is designated as 'pretransfer' editing and involves the hydrolysis of activated Val-AMP. The other activity is designated 'posttransfer' editing and involves deacylation of mischarged Val-tRNA(Ile). This is Isoleucine--tRNA ligase from Xylella fastidiosa (strain 9a5c).